The following is an 854-amino-acid chain: DNA mismatch repair protein MutS (854 aa).

608-615 (GPNMAGKS) provides a ligand contact to ATP.

Belongs to the DNA mismatch repair MutS family.

Functionally, this protein is involved in the repair of mismatches in DNA. It is possible that it carries out the mismatch recognition step. This protein has a weak ATPase activity. The chain is DNA mismatch repair protein MutS from Leuconostoc mesenteroides subsp. mesenteroides (strain ATCC 8293 / DSM 20343 / BCRC 11652 / CCM 1803 / JCM 6124 / NCDO 523 / NBRC 100496 / NCIMB 8023 / NCTC 12954 / NRRL B-1118 / 37Y).